A 300-amino-acid polypeptide reads, in one-letter code: Protoheme IX farnesyltransferase (300 aa).

Helical transmembrane passes span 24–44 (VTQL…PGMV), 46–66 (WHVL…AFAI), 94–114 (PQIL…LYTF), 118–138 (LTMW…TLLL), 146–166 (IVIG…AVTG), 172–192 (AWIL…VLAL), 224–244 (VILF…VVYL), and 278–298 (IVYL…RPLL).

It belongs to the UbiA prenyltransferase family. Protoheme IX farnesyltransferase subfamily.

It is found in the cell inner membrane. The enzyme catalyses heme b + (2E,6E)-farnesyl diphosphate + H2O = Fe(II)-heme o + diphosphate. The protein operates within porphyrin-containing compound metabolism; heme O biosynthesis; heme O from protoheme: step 1/1. Converts heme B (protoheme IX) to heme O by substitution of the vinyl group on carbon 2 of heme B porphyrin ring with a hydroxyethyl farnesyl side group. In Burkholderia ambifaria (strain MC40-6), this protein is Protoheme IX farnesyltransferase.